A 244-amino-acid chain; its full sequence is MRKQYWFIILTYIIMQFSALIAIPLLFKFGYAGGQPTDENMLHAQGLWSVISFIACLVVVLLILRTVPKETLRNGQKDSIGLSILWAIAGFFIALFSQGIAGSIEYYVFGIGRESENTQAILDVIQAVPLMIIVSSIVGPILEEIIFRKIIFGALYEKTNFFFAGLISSVIFGIVHADLKHLLLYTAMGFTFAFLYARTKRIWVPIFAHLMMNTFVVIMQLEPVRNYLEQQSTQMQLIIGGLFL.

6 helical membrane-spanning segments follow: residues 7 to 27 (FIILTYIIMQFSALIAIPLLF), 44 to 64 (AQGLWSVISFIACLVVVLLIL), 80 to 100 (IGLSILWAIAGFFIALFSQGI), 127 to 147 (AVPLMIIVSSIVGPILEEIIF), 159 to 179 (TNFFFAGLISSVIFGIVHADL), and 202 to 222 (IWVPIFAHLMMNTFVVIMQLE). Catalysis depends on proton donor/acceptor residues glutamate 143 and histidine 176.

This sequence belongs to the peptidase U48 family.

It localises to the cell membrane. Functionally, may function as endopeptidase which proteolytically removes the C-terminal three residues of farnesylated peptides containing the CAAX motif where C is cysteine, A is an aliphatic amino acid and X is any amino acid. The protein is Putative membrane peptidase YdiL (ydiL) of Bacillus subtilis (strain 168).